Consider the following 63-residue polypeptide: Beta-defensin 3 (63 aa).

The signal sequence occupies residues 1–20 (MRIHYLLFSFLLVLLSPLSA). Residues 21-22 (FS) constitute a propeptide that is removed on maturation. 3 cysteine pairs are disulfide-bonded: cysteine 31/cysteine 59, cysteine 38/cysteine 52, and cysteine 42/cysteine 60.

This sequence belongs to the beta-defensin family.

The protein resides in the secreted. Has bactericidal activity. The chain is Beta-defensin 3 (Defb3) from Rattus norvegicus (Rat).